The sequence spans 315 residues: Cobalamin biosynthesis protein CobD (315 aa).

5 consecutive transmembrane segments (helical) span residues 48–68 (IAGF…TLGI), 77–97 (PILG…AKGL), 150–170 (DGII…AFLY), 200–220 (VFNY…SFIL), and 295–315 (MVSF…EVII).

This sequence belongs to the CobD/CbiB family.

It localises to the cell membrane. Its pathway is cofactor biosynthesis; adenosylcobalamin biosynthesis. In terms of biological role, converts cobyric acid to cobinamide by the addition of aminopropanol on the F carboxylic group. The polypeptide is Cobalamin biosynthesis protein CobD (Clostridium perfringens (strain 13 / Type A)).